The primary structure comprises 420 residues: Replication factor C large subunit (420 aa).

46 to 53 (GVQGSGKT) is a binding site for ATP.

Belongs to the activator 1 small subunits family. RfcL subfamily. As to quaternary structure, heteromultimer composed of small subunits (RfcS) and large subunits (RfcL).

Its function is as follows. Part of the RFC clamp loader complex which loads the PCNA sliding clamp onto DNA. The chain is Replication factor C large subunit from Thermoplasma volcanium (strain ATCC 51530 / DSM 4299 / JCM 9571 / NBRC 15438 / GSS1).